Here is a 304-residue protein sequence, read N- to C-terminus: Mitochondrial RNA-splicing protein MRS4 (304 aa).

3 Solcar repeats span residues 21–108, 118–200, and 207–300; these read APLH…CKAR, HQPM…ASKF, and YNPL…AKHF. The next 6 helical transmembrane spans lie at 23 to 41, 83 to 102, 120 to 139, 175 to 194, 209 to 228, and 275 to 288; these read LHSQ…HSLM, GVQS…FGTY, PMKT…ALMN, SYPT…FMIY, PLIH…ALTT, and GLKP…PATA.

Belongs to the mitochondrial carrier (TC 2.A.29) family.

It is found in the mitochondrion inner membrane. In terms of biological role, MRS4 suppresses a mitochondrial splice defect in the first intron of the COB gene. It may act as a carrier, exerting its suppressor activity via modulation of solute concentrations in the mitochondrion (possibly of cations). Not essential. The polypeptide is Mitochondrial RNA-splicing protein MRS4 (MRS4) (Saccharomyces cerevisiae (strain ATCC 204508 / S288c) (Baker's yeast)).